A 329-amino-acid chain; its full sequence is Probable nicotianamine synthase 4 (329 aa).

The protein belongs to the nicotianamine synthase (NAS)-like family.

It carries out the reaction 3 S-adenosyl-L-methionine = nicotianamine + 3 S-methyl-5'-thioadenosine + 3 H(+). In terms of biological role, synthesizes nicotianamine, a polyamine that is the first intermediate in the synthesis of the phytosiderophores of the mugineic acid type found in gramineae which serves as a sensor for the physiological iron status within the plant, and/or might be involved in the transport of iron. This chain is Probable nicotianamine synthase 4 (NAS4), found in Hordeum vulgare (Barley).